The chain runs to 337 residues: uncharacterized protein (337 aa).

A run of 2 helical transmembrane segments spans residues 241–261 (FTLL…GAFI) and 273–293 (ASLI…IGII).

The protein belongs to the glycosyltransferase 2 family.

The protein localises to the cell membrane. This is an uncharacterized protein from Bacillus subtilis (strain 168).